The chain runs to 339 residues: Serpentine receptor class gamma-7 (339 aa).

Transmembrane regions (helical) follow at residues 30–50 (YWIQ…IIIT), 65–85 (WILT…LFVV), 98–118 (FSTI…IYNY), 152–172 (IPLF…NTVI), 200–220 (LHLT…LLLM), 239–259 (SIFI…YAFF), and 268–288 (FLVD…PLIF). The segment at 319 to 339 (PFNNTMPRQESPSPNYDSILA) is disordered.

It belongs to the nematode receptor-like protein srg family.

It is found in the membrane. The protein is Serpentine receptor class gamma-7 (srg-7) of Caenorhabditis elegans.